Reading from the N-terminus, the 46-residue chain is KECMVDGTVCYIHNHNDCCGSCLCLNGPIARPWEMMVGNCKCGPKA.

4 disulfides stabilise this stretch: C3/C19, C10/C22, C18/C42, and C24/C40. Residues R31 to W33 are keys region for toxin activity.

The protein belongs to the neurotoxin 16 (SFI) family. As to expression, expressed by the venom gland.

Its subcellular location is the secreted. Functionally, insecticidal toxin. It inhibits insect voltage-gated sodium channels (Nav) by partially blocking the channel pore in DUM neurons from the American cockroach, not by acting as a gating modifier. The inhibition is only partially reversible after prolonged washout. In vivo, the toxin causes flaccid paralysis followed by death when injected into Heliothis virescens larvae. It also causes uncoordinated movements followed by full paralysis to sheep blowflies (Lucilia cuprina). When the toxin is fused to snowdrop lectin, it is orally active against larvae of the tomato moth (Laconobia oleracea), the rice brown planthopper (Nilaparvata lugens), and the peach-potato aphid (Myzus persicae). In Segestria florentina (Tube-web spider), this protein is Mu-segestritoxin-Sf1c.